The chain runs to 416 residues: Probable endo-beta-1,4-glucanase celB (416 aa).

Positions 1–17 (MIWTLAPFVALLPLVTA) are cleaved as a signal peptide. N-linked (GlcNAc...) asparagine glycosylation is found at Asn-45, Asn-104, Asn-117, and Asn-135. The active-site Nucleophile is Glu-214. Residue Glu-219 is the Proton donor of the active site. N-linked (GlcNAc...) asparagine glycosylation is found at Asn-233, Asn-278, Asn-292, and Asn-382.

This sequence belongs to the glycosyl hydrolase 7 (cellulase C) family.

It is found in the secreted. The enzyme catalyses Endohydrolysis of (1-&gt;4)-beta-D-glucosidic linkages in cellulose, lichenin and cereal beta-D-glucans.. Has endoglucanase activity on substrates containing beta-1,4 glycosidic bonds, like in carboxymethylcellulose (CMC), hydroxyethylcellulose (HEC) and beta-glucan. Involved in the degradation of complex natural cellulosic substrates. The chain is Probable endo-beta-1,4-glucanase celB (celB) from Aspergillus flavus (strain ATCC 200026 / FGSC A1120 / IAM 13836 / NRRL 3357 / JCM 12722 / SRRC 167).